We begin with the raw amino-acid sequence, 97 residues long: Nucleoid-associated protein HP_0035 (97 aa).

It belongs to the YbaB/EbfC family. In terms of assembly, homodimer.

The protein localises to the cytoplasm. It localises to the nucleoid. Its function is as follows. Binds to DNA and alters its conformation. May be involved in regulation of gene expression, nucleoid organization and DNA protection. The chain is Nucleoid-associated protein HP_0035 from Helicobacter pylori (strain ATCC 700392 / 26695) (Campylobacter pylori).